A 443-amino-acid polypeptide reads, in one-letter code: Protein PRRC1 (443 aa).

2 disordered regions span residues 1-108 and 139-206; these read MMEE…LSHF and ITRG…QDDA. A compositionally biased stretch (polar residues) spans 34 to 46; sequence VTSSFSSPNTSGM. The segment covering 59–80 has biased composition (pro residues); it reads PSLPPVQPSAPPPFVPLSPAPS. Low complexity predominate over residues 81–96; it reads TPLSGTSVPPSVSPSP. Over residues 169–188 the composition is skewed to polar residues; that stretch reads ITQQASMTSLAQGPGTTSAI.

It belongs to the PRRC1 family. As to quaternary structure, interacts with PRKAR1A; resulting in PKA activation.

Its subcellular location is the golgi apparatus. The protein resides in the cytoplasm. Functionally, may act as a regulator of the protein kinase A (PKA) during embryonic development. The sequence is that of Protein PRRC1 (Prrc1) from Rattus norvegicus (Rat).